Consider the following 272-residue polypeptide: Shikimate dehydrogenase (NADP(+)) (272 aa).

Residues 14-16 (SKS) and T61 contribute to the shikimate site. K65 functions as the Proton acceptor in the catalytic mechanism. NADP(+) is bound at residue E77. Residues N86 and D102 each coordinate shikimate. NADP(+) is bound by residues 126–130 (GAGGA), 149–154 (NRTVSR), and M213. Residue Y215 coordinates shikimate. Position 237 (G237) interacts with NADP(+).

The protein belongs to the shikimate dehydrogenase family. As to quaternary structure, homodimer.

It carries out the reaction shikimate + NADP(+) = 3-dehydroshikimate + NADPH + H(+). It functions in the pathway metabolic intermediate biosynthesis; chorismate biosynthesis; chorismate from D-erythrose 4-phosphate and phosphoenolpyruvate: step 4/7. Its function is as follows. Involved in the biosynthesis of the chorismate, which leads to the biosynthesis of aromatic amino acids. Catalyzes the reversible NADPH linked reduction of 3-dehydroshikimate (DHSA) to yield shikimate (SA). This chain is Shikimate dehydrogenase (NADP(+)), found in Shigella flexneri serotype 5b (strain 8401).